A 137-amino-acid polypeptide reads, in one-letter code: MLQPSNRKYRKDFKGRNRGIASRGNRVSFGEFGLKATECARITARQLEAARRTIARHIKRGGKITIRIFPDKPITKKPLEVRQGKGKGSVEYWVALVQPGRMIFEIEGVDEALAREAFSRAAAKLPLKCLFVKRTVM.

Belongs to the universal ribosomal protein uL16 family. As to quaternary structure, part of the 50S ribosomal subunit.

Binds 23S rRNA and is also seen to make contacts with the A and possibly P site tRNAs. The polypeptide is Large ribosomal subunit protein uL16 (Coxiella burnetii (strain RSA 331 / Henzerling II)).